The chain runs to 285 residues: Probable endonuclease 4 (285 aa).

Zn(2+)-binding residues include H69, H109, E145, D179, H182, H216, D229, H231, and E261.

This sequence belongs to the AP endonuclease 2 family. The cofactor is Zn(2+).

It carries out the reaction Endonucleolytic cleavage to 5'-phosphooligonucleotide end-products.. In terms of biological role, endonuclease IV plays a role in DNA repair. It cleaves phosphodiester bonds at apurinic or apyrimidinic (AP) sites, generating a 3'-hydroxyl group and a 5'-terminal sugar phosphate. This chain is Probable endonuclease 4, found in Yersinia pestis bv. Antiqua (strain Antiqua).